The following is a 384-amino-acid chain: Histidinol-phosphate aminotransferase 2 (384 aa).

Lys236 is modified (N6-(pyridoxal phosphate)lysine).

Belongs to the class-II pyridoxal-phosphate-dependent aminotransferase family. Histidinol-phosphate aminotransferase subfamily. Homodimer. It depends on pyridoxal 5'-phosphate as a cofactor.

It catalyses the reaction L-histidinol phosphate + 2-oxoglutarate = 3-(imidazol-4-yl)-2-oxopropyl phosphate + L-glutamate. It functions in the pathway amino-acid biosynthesis; L-histidine biosynthesis; L-histidine from 5-phospho-alpha-D-ribose 1-diphosphate: step 7/9. The polypeptide is Histidinol-phosphate aminotransferase 2 (hisC2) (Nostoc sp. (strain PCC 7120 / SAG 25.82 / UTEX 2576)).